The primary structure comprises 612 residues: MIVDNSKDFDLKSFLANLTTHSGVYRMLDKHGEIIYVGKAKNLKNRINSYFSKGAKDSKTLMMVEQIARIEITITPSDYEAYLLENNLIKQHRPKYNILFKDDKSYPYLVISRDKFPRVSFYRGKSAYKKGQCFGPYVSISSVKNTLNTIQKIFPIRQCENSYYKSRVRPCLQYQIKRCLAPCVGLVSQQQYDEQLAILKKFLAGKFSSVLEEISANMYQASEDMEYEKAQVYRDQLVVLRKLQQQQIVDIQEDKTFDVIGIYMQDSYASIALLQIQNGDVVADRHWSIDAKGQDKTSIMHAFLSHFYLGDEIRNIWPKNIILSKVEFADITDLMNSISQKIGQAINWIIAPAADNLKWLKLAEVNARQKLNIYTSSKSQYQKRLESLKEFLESEKDIKRIECFDISHFQGEATIASCVVYTDDGEDRKSHRRYNIKDIKSGDDYAAIHQAVSRRVSSGLEADNLPDVMIIDGGKGQIHQAEAVFREYGIQDKVQLVSLGKGVERISGKEKIYKGFDDTEYTLDEHNPGFLLLRQVRDSAHDHAIKGQRKKVSANRQSSIIEEIEGVGPKRRKALMMYFGGWQELSRASVDEIAKVKGISKKLAQEIWECFH.

In terms of domain architecture, GIY-YIG spans 20-98 (THSGVYRMLD…IKQHRPKYNI (79 aa)). Residues 208 to 243 (SSVLEEISANMYQASEDMEYEKAQVYRDQLVVLRKL) form the UVR domain.

It belongs to the UvrC family. In terms of assembly, interacts with UvrB in an incision complex.

It localises to the cytoplasm. Its function is as follows. The UvrABC repair system catalyzes the recognition and processing of DNA lesions. UvrC both incises the 5' and 3' sides of the lesion. The N-terminal half is responsible for the 3' incision and the C-terminal half is responsible for the 5' incision. The sequence is that of UvrABC system protein C from Francisella tularensis subsp. holarctica (strain LVS).